The sequence spans 720 residues: Calpain-12 (720 aa).

The Calpain catalytic domain maps to Leu-45–Ser-341. Catalysis depends on residues Cys-105, His-259, and Asn-283. Positions Pro-342–Ala-541 are domain III. Acidic residues predominate over residues Asp-393–Gly-403. Residues Asp-393 to Gly-415 are disordered. Residues Leu-542–Ser-720 form a domain IV region. Residues Gly-621–His-656 enclose the EF-hand domain. Ca(2+)-binding residues include Asp-634, Asp-636, Ser-638, Thr-640, and Glu-645.

The protein belongs to the peptidase C2 family. As to expression, expression localized to the cortex of the hair follicle during the anagen phase of hair cycle.

In terms of biological role, calcium-regulated non-lysosomal thiol-protease. This Mus musculus (Mouse) protein is Calpain-12 (Capn12).